Consider the following 112-residue polypeptide: Small ribosomal subunit protein uS17 (112 aa).

The protein belongs to the universal ribosomal protein uS17 family. In terms of assembly, part of the 30S ribosomal subunit.

Functionally, one of the primary rRNA binding proteins, it binds specifically to the 5'-end of 16S ribosomal RNA. This Thermotoga neapolitana (strain ATCC 49049 / DSM 4359 / NBRC 107923 / NS-E) protein is Small ribosomal subunit protein uS17.